A 201-amino-acid polypeptide reads, in one-letter code: ADP-ribosylation factor-related protein 1 (201 aa).

The residue at position 1 (methionine 1) is an N-acetylmethionine. GTP is bound by residues 24-31 (GLDNAGKT), 75-79 (DLGGQ), and 134-137 (NKQD).

It belongs to the small GTPase superfamily. Arf family. Interacts with SYS1.

The protein localises to the golgi apparatus. Its subcellular location is the trans-Golgi network. Functionally, trans-Golgi-associated GTPase that regulates protein sorting. Controls the targeting of ARL1 and its effector to the trans-Golgi. Required for the lipidation of chylomicrons in the intestine and required for VLDL lipidation in the liver. In Bos taurus (Bovine), this protein is ADP-ribosylation factor-related protein 1 (ARFRP1).